Here is a 473-residue protein sequence, read N- to C-terminus: FAD-dependent oxidoreductase dpchF (473 aa).

Positions 1–21 (MKLSFIASPVWALALAQFAAA) are cleaved as a signal peptide. 5 N-linked (GlcNAc...) asparagine glycosylation sites follow: N98, N128, N181, N262, and N330.

The protein belongs to the beta-cyclopiazonate dehydrogenase family. FAD is required as a cofactor.

It participates in secondary metabolite biosynthesis; terpenoid biosynthesis. In terms of biological role, FAD-dependent oxidoreductase; part of the gene cluster that mediates the biosynthesis of the diterpenoid pyrones higginsianins A and B. The first step of the pathway is the synthesis of the alpha-pyrone moiety by the polyketide synthase dpchA via condensation of one acetyl-CoA starter unit with 3 malonyl-CoA units and 2 methylations. The alpha-pyrone is then combined with geranylgeranyl pyrophosphate (GGPP) formed by the GGPP synthase dpchD through the action of the prenyltransferase dpchC to yield a linear alpha-pyrone diterpenoid. Subsequent steps in the diterpenoid pyrone biosynthetic pathway involve the decalin core formation, which is initiated by the epoxidation of the C10-C11 olefin by the FAD-dependent oxidoreductase dpchE, and is followed by a cyclization cascade catalyzed by the terpene cyclase dpchB. The short chain dehydrogenase/reductase dpchG then oxidizes the 8S hydroxy group to a ketone and the short chain dehydrogenase/reductase dpchH reduces the ketone to the 8R hydroxy group to yield higginsianin B. Finally, the FAD-dependent oxidoreductase dpchF converts higginsianin B into higginsianin A. The polypeptide is FAD-dependent oxidoreductase dpchF (Colletotrichum higginsianum (strain IMI 349063) (Crucifer anthracnose fungus)).